Reading from the N-terminus, the 198-residue chain is Autophagy-related protein 33 (198 aa).

Helical transmembrane passes span 17–37, 60–80, and 86–106; these read VSLGLLTGVSYSISSLALPAL, PVLALTSLASAPFLISFFLAP, and PYLLYTAILATLSSVAPILIP. A disordered region spans residues 111 to 147; it reads APRRTASSAPRKSSRAKMEASYEVLGDAHSEPASDED. Low complexity predominate over residues 112-121; that stretch reads PRRTASSAPR. Residues 126–142 are compositionally biased toward basic and acidic residues; sequence AKMEASYEVLGDAHSEP. Residues 171-191 traverse the membrane as a helical segment; it reads TAISALGFAMAVVGIWGDGAP.

This sequence belongs to the ATG33 family.

The protein resides in the mitochondrion membrane. Functionally, involved in the selective degradation of mitochondria via autophagy during starvation and at post-log phase. Autophagy is required for proper vegetative growth, asexual/sexual reproduction, and full virulence. Autophagy is particularly involved in the biosynthesis of deoxynivalenol (DON), an important virulence determinant. In Gibberella zeae (strain ATCC MYA-4620 / CBS 123657 / FGSC 9075 / NRRL 31084 / PH-1) (Wheat head blight fungus), this protein is Autophagy-related protein 33.